A 537-amino-acid polypeptide reads, in one-letter code: Cytochrome P450 monooxygenase alt2 (537 aa).

Residues 4 to 24 form a helical membrane-spanning segment; the sequence is HLLILAAVVLLIIHIVNNFLI. Cys-474 provides a ligand contact to heme.

The protein belongs to the cytochrome P450 family. Requires heme as cofactor.

The protein resides in the membrane. It functions in the pathway secondary metabolite biosynthesis. Functionally, cytochrome P450 monooxygenase; part of the gene cluster that mediates the biosynthesis of alternapyrone derivatives. Alternapyrone is a decaketide with octa-methylation from methionine on every C2 unit except the third unit. All the domains in the polyketide synthase alt5 are apparently involved in alternapyrone synthesis, that is, the 8 CMeT, 7 KR, 7 DH, and 4 ER reactions in the 9 KS-mediated condensation steps required for alternapyrone synthesis. the alternapyrone produced by alt5 might be intensively modified by cytochrome P450 monooxygenases alt1, alt2 and alt3 and FAD-dependent oxidoreductase alt4 present in the alt gene cluster. The sequence is that of Cytochrome P450 monooxygenase alt2 from Alternaria solani.